A 200-amino-acid chain; its full sequence is Phospholipase A2 inhibitor LNF1 (200 aa).

The signal sequence occupies residues 1 to 19; that stretch reads MKYLHTICLLFIFVARGNS. Disulfide bonds link cysteine 22-cysteine 46, cysteine 25-cysteine 32, cysteine 39-cysteine 67, cysteine 73-cysteine 94, cysteine 95-cysteine 100, cysteine 118-cysteine 143, cysteine 136-cysteine 165, and cysteine 169-cysteine 191. N-linked (GlcNAc...) asparagine glycosylation occurs at asparagine 176.

It belongs to the CNF-like-inhibitor family. Occurs as a mixture of oligomers. Tetrameric arrangement appears to be the predominant quaternary structure. As to expression, expressed by the liver.

The protein resides in the secreted. Inhibits the enzymatic activity of phospholipase A2 (PA2). The protein is Phospholipase A2 inhibitor LNF1 of Lachesis muta muta (Bushmaster).